Reading from the N-terminus, the 126-residue chain is Protein C10 (126 aa).

Ala2 is modified (N-acetylalanine).

Belongs to the UPF0456 family. As to expression, ubiquitously expressed, with higher expression in lung and fetal brain.

The protein resides in the cytoplasm. Functionally, in brain, may be required for corpus callosum development. The chain is Protein C10 (C12orf57) from Homo sapiens (Human).